Here is a 224-residue protein sequence, read N- to C-terminus: Ribonuclease HII (224 aa).

The RNase H type-2 domain maps to 7–217 (STIMGIDEAG…SNAVIADCLQ (211 aa)). 3 residues coordinate a divalent metal cation: Asp13, Glu14, and Asp111.

Belongs to the RNase HII family. It depends on Mn(2+) as a cofactor. The cofactor is Mg(2+).

Its subcellular location is the cytoplasm. It carries out the reaction Endonucleolytic cleavage to 5'-phosphomonoester.. In terms of biological role, endonuclease that specifically degrades the RNA of RNA-DNA hybrids. This chain is Ribonuclease HII, found in Methanocella arvoryzae (strain DSM 22066 / NBRC 105507 / MRE50).